The chain runs to 331 residues: Induced myeloid leukemia cell differentiation protein Mcl-1 homolog (331 aa).

Positions 85-156 (LAVPPEEMAA…PPEEEEDDLY (72 aa)) are PEST-like. Ser102 carries the phosphoserine modification. Residue Lys117 forms a Glycyl lysine isopeptide (Lys-Gly) (interchain with G-Cter in ubiquitin) linkage. Residues 130–154 (EAAKSSGADGSLPSTPPPPEEEEDD) form a disordered region. Ser140 is modified (phosphoserine; by GSK3-alpha and GSK3-beta). Position 143 is a phosphoserine (Ser143). Phosphothreonine; by MAPK is present on Thr144. Residues Lys175 and Lys178 each participate in a glycyl lysine isopeptide (Lys-Gly) (interchain with G-Cter in ubiquitin) cross-link. A BH3 motif is present at residues 190-204 (ALETLRRVGDGVQRN). The BH1 motif lies at 234–253 (VFKDGVTNWGRIVTLISFGA). The short motif at 285–300 (DWLVKQRGWDGFVEFF) is the BH2 element. Residues 308–330 (GIRNVLLAFAGVAGVGAGLAYLI) traverse the membrane as a helical segment.

This sequence belongs to the Bcl-2 family. As to quaternary structure, interacts with HIF3A isoform 2 (via C-terminus domain). Interacts with BAD, BOK, BIK, BAX, BAK1, and TPT1. Interacts with BBC3, BMF and PMAIP1. Interacts with BOP. Interacts with BCL2L11; this interaction may sequester BCL2L11 and prevent its pro-apoptotic activity. Interacts with GIMAP5 and HSPA8/HSC70; the interaction between HSPA8 and MCL1 is impaired in the absence of GIMAP5. Cleaved by CASP3 during apoptosis, yielding a pro-apoptotic C-terminal fragment. Post-translationally, rapidly degraded in the absence of phosphorylation in the PEST region. In terms of processing, phosphorylated on Ser-140, by GSK3, in response to IL3/interleukin-3 withdrawal. Phosphorylation at Ser-140 induces ubiquitination and proteasomal degradation, abrogating the anti-apoptotic activity. Treatment with taxol or okadaic acid induces phosphorylation on additional sites. Ubiquitinated. Ubiquitination is induced by phosphorylation at Ser-140. Deubiquitinated by USP20; leading to increased stability.

The protein localises to the membrane. It localises to the cytoplasm. Its subcellular location is the mitochondrion. It is found in the nucleus. The protein resides in the nucleoplasm. In terms of biological role, involved in the regulation of apoptosis versus cell survival, and in the maintenance of viability but not of proliferation. Mediates its effects by interactions with a number of other regulators of apoptosis. Isoform 2 has antiapoptotic activity. In Mus musculus (Mouse), this protein is Induced myeloid leukemia cell differentiation protein Mcl-1 homolog (Mcl1).